We begin with the raw amino-acid sequence, 344 residues long: N-acetyl-gamma-glutamyl-phosphate reductase (344 aa).

Cys149 is an active-site residue.

This sequence belongs to the NAGSA dehydrogenase family. Type 1 subfamily.

It localises to the cytoplasm. The catalysed reaction is N-acetyl-L-glutamate 5-semialdehyde + phosphate + NADP(+) = N-acetyl-L-glutamyl 5-phosphate + NADPH + H(+). It participates in amino-acid biosynthesis; L-arginine biosynthesis; N(2)-acetyl-L-ornithine from L-glutamate: step 3/4. Catalyzes the NADPH-dependent reduction of N-acetyl-5-glutamyl phosphate to yield N-acetyl-L-glutamate 5-semialdehyde. This Syntrophobacter fumaroxidans (strain DSM 10017 / MPOB) protein is N-acetyl-gamma-glutamyl-phosphate reductase.